A 248-amino-acid chain; its full sequence is ATP synthase subunit a (248 aa).

6 helical membrane passes run 27–47, 83–103, 113–133, 142–162, 192–212, and 215–235; these read FTNS…LMLV, FFPL…IGIV, LIVT…YGFS, LFVP…IEVI, FVAM…LPLG, and IALT…FAIL.

It belongs to the ATPase A chain family. As to quaternary structure, F-type ATPases have 2 components, CF(1) - the catalytic core - and CF(0) - the membrane proton channel. CF(1) has five subunits: alpha(3), beta(3), gamma(1), delta(1), epsilon(1). CF(0) has four main subunits: a, b, b' and c.

The protein localises to the cell inner membrane. Key component of the proton channel; it plays a direct role in the translocation of protons across the membrane. The sequence is that of ATP synthase subunit a from Rhodopseudomonas palustris (strain ATCC BAA-98 / CGA009).